The following is a 240-amino-acid chain: 4-hydroxy-tetrahydrodipicolinate reductase (240 aa).

NAD(+)-binding positions include 79 to 81 (ATT) and 103 to 106 (SANM). H135 acts as the Proton donor/acceptor in catalysis. H136 contributes to the (S)-2,3,4,5-tetrahydrodipicolinate binding site. Catalysis depends on K139, which acts as the Proton donor. Residue 145-146 (GT) participates in (S)-2,3,4,5-tetrahydrodipicolinate binding.

Belongs to the DapB family.

The protein localises to the cytoplasm. It carries out the reaction (S)-2,3,4,5-tetrahydrodipicolinate + NAD(+) + H2O = (2S,4S)-4-hydroxy-2,3,4,5-tetrahydrodipicolinate + NADH + H(+). The enzyme catalyses (S)-2,3,4,5-tetrahydrodipicolinate + NADP(+) + H2O = (2S,4S)-4-hydroxy-2,3,4,5-tetrahydrodipicolinate + NADPH + H(+). It participates in amino-acid biosynthesis; L-lysine biosynthesis via DAP pathway; (S)-tetrahydrodipicolinate from L-aspartate: step 4/4. Its function is as follows. Catalyzes the conversion of 4-hydroxy-tetrahydrodipicolinate (HTPA) to tetrahydrodipicolinate. This Staphylococcus epidermidis (strain ATCC 12228 / FDA PCI 1200) protein is 4-hydroxy-tetrahydrodipicolinate reductase.